We begin with the raw amino-acid sequence, 358 residues long: Photosystem II protein D1 1 (358 aa).

The next 3 helical transmembrane spans lie at 28-45, 117-132, and 141-155; these read YVGW…AATI, HFLI…QWEL, and WICV…AAFA. Residue H117 participates in chlorophyll a binding. Y125 is a pheophytin a binding site. D169 and E188 together coordinate [CaMn4O5] cluster. A helical membrane pass occupies residues 196-217; that stretch reads FHMLGVAGVFGGSLFSAMHGSL. Residue H197 participates in chlorophyll a binding. A quinone contacts are provided by residues H214 and 263 to 264; that span reads SF. H214 contributes to the Fe cation binding site. Residue H271 coordinates Fe cation. Residues 273-287 traverse the membrane as a helical segment; it reads FLGAWPVIGIWFTSM. Residues H331, E332, D341, and A343 each contribute to the [CaMn4O5] cluster site. The propeptide occupies 344 to 358; sequence AAESTPVALQAPAIG.

Belongs to the reaction center PufL/M/PsbA/D family. PSII is composed of 1 copy each of membrane proteins PsbA, PsbB, PsbC, PsbD, PsbE, PsbF, PsbH, PsbI, PsbJ, PsbK, PsbL, PsbM, PsbT, PsbX, PsbY, PsbZ, Psb30/Ycf12, peripheral proteins PsbO, CyanoQ (PsbQ), PsbU, PsbV and a large number of cofactors. It forms dimeric complexes. The D1/D2 heterodimer binds P680, chlorophylls that are the primary electron donor of PSII, and subsequent electron acceptors. It shares a non-heme iron and each subunit binds pheophytin, quinone, additional chlorophylls, carotenoids and lipids. D1 provides most of the ligands for the Mn4-Ca-O5 cluster of the oxygen-evolving complex (OEC). There is also a Cl(-1) ion associated with D1 and D2, which is required for oxygen evolution. The PSII complex binds additional chlorophylls, carotenoids and specific lipids. is required as a cofactor. In terms of processing, tyr-160 forms a radical intermediate that is referred to as redox-active TyrZ, YZ or Y-Z. C-terminally processed by CtpA; processing is essential to allow assembly of the oxygen-evolving complex and thus photosynthetic growth.

It is found in the cellular thylakoid membrane. The catalysed reaction is 2 a plastoquinone + 4 hnu + 2 H2O = 2 a plastoquinol + O2. Functionally, photosystem II (PSII) is a light-driven water:plastoquinone oxidoreductase that uses light energy to abstract electrons from H(2)O, generating O(2) and a proton gradient subsequently used for ATP formation. It consists of a core antenna complex that captures photons, and an electron transfer chain that converts photonic excitation into a charge separation. The D1/D2 (PsbA/PsbD) reaction center heterodimer binds P680, the primary electron donor of PSII as well as several subsequent electron acceptors. The protein is Photosystem II protein D1 1 of Synechococcus sp. (strain CC9902).